The chain runs to 458 residues: Argininosuccinate lyase (458 aa).

Belongs to the lyase 1 family. Argininosuccinate lyase subfamily.

It is found in the cytoplasm. The catalysed reaction is 2-(N(omega)-L-arginino)succinate = fumarate + L-arginine. The protein operates within amino-acid biosynthesis; L-arginine biosynthesis; L-arginine from L-ornithine and carbamoyl phosphate: step 3/3. This Salmonella typhi protein is Argininosuccinate lyase.